The primary structure comprises 143 residues: NADH-quinone oxidoreductase subunit A (143 aa).

The next 3 helical transmembrane spans lie at 8-28 (FGNV…GYLT), 63-83 (FYVV…LYPW), and 90-110 (LGVF…LGLV).

It belongs to the complex I subunit 3 family. As to quaternary structure, NDH-1 is composed of 14 different subunits. Subunits NuoA, H, J, K, L, M, N constitute the membrane sector of the complex.

It localises to the cell inner membrane. It carries out the reaction a quinone + NADH + 5 H(+)(in) = a quinol + NAD(+) + 4 H(+)(out). In terms of biological role, NDH-1 shuttles electrons from NADH, via FMN and iron-sulfur (Fe-S) centers, to quinones in the respiratory chain. The immediate electron acceptor for the enzyme in this species is believed to be a menaquinone. Couples the redox reaction to proton translocation (for every two electrons transferred, four hydrogen ions are translocated across the cytoplasmic membrane), and thus conserves the redox energy in a proton gradient. The chain is NADH-quinone oxidoreductase subunit A from Chlorobium phaeobacteroides (strain DSM 266 / SMG 266 / 2430).